Here is a 257-residue protein sequence, read N- to C-terminus: Imidazole glycerol phosphate synthase subunit hisF1 (257 aa).

Active-site residues include Asp11 and Asp130.

The protein belongs to the HisA/HisF family. As to quaternary structure, heterodimer of HisH and HisF.

It localises to the cytoplasm. It catalyses the reaction 5-[(5-phospho-1-deoxy-D-ribulos-1-ylimino)methylamino]-1-(5-phospho-beta-D-ribosyl)imidazole-4-carboxamide + L-glutamine = D-erythro-1-(imidazol-4-yl)glycerol 3-phosphate + 5-amino-1-(5-phospho-beta-D-ribosyl)imidazole-4-carboxamide + L-glutamate + H(+). Its pathway is amino-acid biosynthesis; L-histidine biosynthesis; L-histidine from 5-phospho-alpha-D-ribose 1-diphosphate: step 5/9. Functionally, IGPS catalyzes the conversion of PRFAR and glutamine to IGP, AICAR and glutamate. The HisF subunit catalyzes the cyclization activity that produces IGP and AICAR from PRFAR using the ammonia provided by the HisH subunit. The sequence is that of Imidazole glycerol phosphate synthase subunit hisF1 (hisF1) from Vibrio vulnificus (strain YJ016).